The sequence spans 190 residues: Holliday junction branch migration complex subunit RuvA (190 aa).

A domain I region spans residues 1-63 (MLDFIKGKVI…EESIEIYGFL (63 aa)). The domain II stretch occupies residues 64–139 (ESSERDLFEE…ILPSLQYEKD (76 aa)). A region of interest (flexible linker) is located at residue Asp-139. The interval 139 to 190 (DQKYDDILSALLNLGYKRLEAKEVLDKIYNNEKDEATIIRESLSILAGKDGK) is domain III.

Belongs to the RuvA family. Homotetramer. Forms an RuvA(8)-RuvB(12)-Holliday junction (HJ) complex. HJ DNA is sandwiched between 2 RuvA tetramers; dsDNA enters through RuvA and exits via RuvB. An RuvB hexamer assembles on each DNA strand where it exits the tetramer. Each RuvB hexamer is contacted by two RuvA subunits (via domain III) on 2 adjacent RuvB subunits; this complex drives branch migration. In the full resolvosome a probable DNA-RuvA(4)-RuvB(12)-RuvC(2) complex forms which resolves the HJ.

The protein resides in the cytoplasm. The RuvA-RuvB-RuvC complex processes Holliday junction (HJ) DNA during genetic recombination and DNA repair, while the RuvA-RuvB complex plays an important role in the rescue of blocked DNA replication forks via replication fork reversal (RFR). RuvA specifically binds to HJ cruciform DNA, conferring on it an open structure. The RuvB hexamer acts as an ATP-dependent pump, pulling dsDNA into and through the RuvAB complex. HJ branch migration allows RuvC to scan DNA until it finds its consensus sequence, where it cleaves and resolves the cruciform DNA. The sequence is that of Holliday junction branch migration complex subunit RuvA from Thermodesulfovibrio yellowstonii (strain ATCC 51303 / DSM 11347 / YP87).